The primary structure comprises 137 residues: Large ribosomal subunit protein uL16 (137 aa).

The protein belongs to the universal ribosomal protein uL16 family. Part of the 50S ribosomal subunit.

Binds 23S rRNA and is also seen to make contacts with the A and possibly P site tRNAs. The chain is Large ribosomal subunit protein uL16 from Streptococcus pneumoniae serotype 2 (strain D39 / NCTC 7466).